The primary structure comprises 324 residues: Quinolinate synthase (324 aa).

His-39 and Ser-56 together coordinate iminosuccinate. Cys-101 lines the [4Fe-4S] cluster pocket. Residues 127 to 129 (YIN) and Ser-144 contribute to the iminosuccinate site. Cys-187 is a binding site for [4Fe-4S] cluster. Iminosuccinate is bound by residues 213 to 215 (HPE) and Thr-230. Cys-280 contributes to the [4Fe-4S] cluster binding site.

This sequence belongs to the quinolinate synthase family. Type 2 subfamily. [4Fe-4S] cluster serves as cofactor.

It localises to the cytoplasm. It catalyses the reaction iminosuccinate + dihydroxyacetone phosphate = quinolinate + phosphate + 2 H2O + H(+). It participates in cofactor biosynthesis; NAD(+) biosynthesis; quinolinate from iminoaspartate: step 1/1. Its function is as follows. Catalyzes the condensation of iminoaspartate with dihydroxyacetone phosphate to form quinolinate. The protein is Quinolinate synthase of Nostoc punctiforme (strain ATCC 29133 / PCC 73102).